We begin with the raw amino-acid sequence, 99 residues long: uncharacterized protein (99 aa).

This is an uncharacterized protein from Haemophilus influenzae (strain ATCC 51907 / DSM 11121 / KW20 / Rd).